The chain runs to 543 residues: uncharacterized protein (543 aa).

The 59-residue stretch at 1–59 (MLKKNDIVEVEIVDLTHEGAGVAKVDGLVFFVENALPSEKILMRVLKVNKKIGFGKVEK) folds into the TRAM domain. Residues Gln-283, Tyr-312, Glu-333, and Asp-381 each coordinate S-adenosyl-L-methionine. Cys-408 serves as the catalytic Nucleophile.

This sequence belongs to the class I-like SAM-binding methyltransferase superfamily. RNA M5U methyltransferase family.

This is an uncharacterized protein from Streptococcus pneumoniae (strain ATCC BAA-255 / R6).